Consider the following 601-residue polypeptide: Potassium channel KAT2 (601 aa).

At 1-42 (METISNIFHNDPLPPLGARANQSIKLRKFIISPYDSRYRTWE) the chain is on the cytoplasmic side. The helical transmembrane segment at 43 to 63 (TFLLVLVVYSAWICPFELAYL) threads the bilayer. The Extracellular portion of the chain corresponds to 64 to 71 (RNLSWKVS). A helical membrane pass occupies residues 72–92 (LVDNIIDSFFAIDIILTFFLA). At 93–112 (YLDQKSYLLVDDPKRIVARY) the chain is on the cytoplasmic side. A helical transmembrane segment spans residues 113–133 (FSSWFLFDVCSTIPYQLLGQI). At 134 to 144 (FKKHENGLAYR) the chain is on the extracellular side. Residues 145-165 (LLSMLRLWRLRRLSELFARLE) traverse the membrane as a helical; Voltage-sensor segment. At 166–179 (KDIRLNYYWIRCTK) the chain is on the cytoplasmic side. A helical transmembrane segment spans residues 180–200 (LISVTLFAVHCSGCFNYLIAD). The Extracellular portion of the chain corresponds to 201–227 (RYPNPARTWIGAAIPNYRSQNLWVRYV). The pore-forming intramembrane region spans 228 to 247 (TAIYWSITTLTTTGYGDLHA). Residues 248 to 251 (ENQR) are Extracellular-facing. A helical transmembrane segment spans residues 252–272 (EMLFSICYMLFNLGLTAYLIG). The Cytoplasmic segment spans residues 273–601 (NMTNLVVQGS…DGDHLFFMEI (329 aa)). 356 to 475 (LFHGVSFTCM…RVILNNLSQK (120 aa)) serves as a coordination point for a nucleoside 3',5'-cyclic phosphate. One can recognise a KHA domain in the interval 530–601 (RVTIHMYSQR…DGDHLFFMEI (72 aa)).

This sequence belongs to the potassium channel family. Plant (TC 1.A.1.4) subfamily.

The protein localises to the membrane. Its function is as follows. Probable inward-rectifying potassium channel. Assuming opened or closed conformations in response to the voltage difference across the membrane, the channel is activated by hyperpolarization. This is Potassium channel KAT2 from Oryza sativa subsp. japonica (Rice).